A 171-amino-acid chain; its full sequence is 3-hydroxydecanoyl-[acyl-carrier-protein] dehydratase (171 aa).

The active site involves His71.

Belongs to the thioester dehydratase family. FabA subfamily. As to quaternary structure, homodimer.

The protein localises to the cytoplasm. It catalyses the reaction a (3R)-hydroxyacyl-[ACP] = a (2E)-enoyl-[ACP] + H2O. The catalysed reaction is (3R)-hydroxydecanoyl-[ACP] = (2E)-decenoyl-[ACP] + H2O. It carries out the reaction (2E)-decenoyl-[ACP] = (3Z)-decenoyl-[ACP]. It functions in the pathway lipid metabolism; fatty acid biosynthesis. In terms of biological role, necessary for the introduction of cis unsaturation into fatty acids. Catalyzes the dehydration of (3R)-3-hydroxydecanoyl-ACP to E-(2)-decenoyl-ACP and then its isomerization to Z-(3)-decenoyl-ACP. Can catalyze the dehydratase reaction for beta-hydroxyacyl-ACPs with saturated chain lengths up to 16:0, being most active on intermediate chain length. The chain is 3-hydroxydecanoyl-[acyl-carrier-protein] dehydratase from Sinorhizobium medicae (strain WSM419) (Ensifer medicae).